The following is a 217-amino-acid chain: Probable transaldolase (217 aa).

Lys85 (schiff-base intermediate with substrate) is an active-site residue.

It belongs to the transaldolase family. Type 3B subfamily.

The protein localises to the cytoplasm. The catalysed reaction is D-sedoheptulose 7-phosphate + D-glyceraldehyde 3-phosphate = D-erythrose 4-phosphate + beta-D-fructose 6-phosphate. The protein operates within carbohydrate degradation; pentose phosphate pathway; D-glyceraldehyde 3-phosphate and beta-D-fructose 6-phosphate from D-ribose 5-phosphate and D-xylulose 5-phosphate (non-oxidative stage): step 2/3. Its function is as follows. Transaldolase is important for the balance of metabolites in the pentose-phosphate pathway. The sequence is that of Probable transaldolase from Agathobacter rectalis (strain ATCC 33656 / DSM 3377 / JCM 17463 / KCTC 5835 / VPI 0990) (Eubacterium rectale).